Reading from the N-terminus, the 461-residue chain is Photosystem II CP43 reaction center protein (461 aa).

A propeptide spanning residues 1 to 2 is cleaved from the precursor; it reads ME. Residue Thr3 is modified to N-acetylthreonine. Phosphothreonine is present on Thr3. A run of 5 helical transmembrane segments spans residues 57–81, 122–143, 166–188, 243–263, and 279–300; these read LFEV…PHLA, LIGP…KDKN, KALY…RIIT, QPWA…LSYS, and WFNN…ASQS. [CaMn4O5] cluster is bound at residue Glu355. The helical transmembrane segment at 435–459 threads the bilayer; that stretch reads RARAAAAGFEKGIDRFNEPTLSLRP.

The protein belongs to the PsbB/PsbC family. PsbC subfamily. PSII is composed of 1 copy each of membrane proteins PsbA, PsbB, PsbC, PsbD, PsbE, PsbF, PsbH, PsbI, PsbJ, PsbK, PsbL, PsbM, PsbT, PsbX, PsbY, PsbZ, Psb30/Ycf12, at least 3 peripheral proteins of the oxygen-evolving complex and a large number of cofactors. It forms dimeric complexes. Binds multiple chlorophylls and provides some of the ligands for the Ca-4Mn-5O cluster of the oxygen-evolving complex. It may also provide a ligand for a Cl- that is required for oxygen evolution. PSII binds additional chlorophylls, carotenoids and specific lipids. serves as cofactor.

The protein resides in the plastid. The protein localises to the chloroplast thylakoid membrane. Functionally, one of the components of the core complex of photosystem II (PSII). It binds chlorophyll and helps catalyze the primary light-induced photochemical processes of PSII. PSII is a light-driven water:plastoquinone oxidoreductase, using light energy to abstract electrons from H(2)O, generating O(2) and a proton gradient subsequently used for ATP formation. This chain is Photosystem II CP43 reaction center protein, found in Oedogonium cardiacum (Filamentous green alga).